Reading from the N-terminus, the 311-residue chain is HPr kinase/phosphorylase (311 aa).

Active-site residues include histidine 138 and lysine 159. Residue 153 to 160 (GDSGIGKS) participates in ATP binding. Serine 160 provides a ligand contact to Mg(2+). Aspartate 177 functions as the Proton acceptor; for phosphorylation activity. Proton donor; for dephosphorylation activity in the catalytic mechanism. The important for the catalytic mechanism of both phosphorylation and dephosphorylation stretch occupies residues 201–210 (IEIRGVGIID). Glutamate 202 contacts Mg(2+). Arginine 243 is an active-site residue. The segment at 264–269 (PVKTGR) is important for the catalytic mechanism of dephosphorylation.

It belongs to the HPrK/P family. Homohexamer. Mg(2+) serves as cofactor.

The catalysed reaction is [HPr protein]-L-serine + ATP = [HPr protein]-O-phospho-L-serine + ADP + H(+). It carries out the reaction [HPr protein]-O-phospho-L-serine + phosphate + H(+) = [HPr protein]-L-serine + diphosphate. Functionally, catalyzes the ATP- as well as the pyrophosphate-dependent phosphorylation of a specific serine residue in HPr, a phosphocarrier protein of the phosphoenolpyruvate-dependent sugar phosphotransferase system (PTS). HprK/P also catalyzes the pyrophosphate-producing, inorganic phosphate-dependent dephosphorylation (phosphorolysis) of seryl-phosphorylated HPr (P-Ser-HPr). The two antagonistic activities of HprK/P are regulated by several intracellular metabolites, which change their concentration in response to the absence or presence of rapidly metabolisable carbon sources (glucose, fructose, etc.) in the growth medium. Therefore, by controlling the phosphorylation state of HPr, HPrK/P is a sensor enzyme that plays a major role in the regulation of carbon metabolism and sugar transport: it mediates carbon catabolite repression (CCR), and regulates PTS-catalyzed carbohydrate uptake and inducer exclusion. The chain is HPr kinase/phosphorylase from Streptococcus pneumoniae (strain 70585).